The sequence spans 340 residues: Sulfotransferase ppzF (340 aa).

It functions in the pathway secondary metabolite biosynthesis. Functionally, sulfotransferase; part of the gene cluster that mediates the biosynthesis of pyrrolopyrazines, secondary metabolites showing insecticidal activity. The role of ppzF within the pathway has still to be determined. The single multifunctional NRPS ppzA is sufficient to produce peramine via condensation of 1-pyrroline-5-carboxylate and arginine, N-methylation of the alpha-amino group of arginine and reduction of the thioester and the cyclization to form an iminium ion resulting in release from the peptide synthetase. Deprotonation of this intermediate and oxidation of the pyrroline ring would give rise to peramine. In Epichloe species that produce only peramine, the peramine synthetase gene is not localized in a gene cluster, in contrast to Metarhizium species that contain additional pyrrolopyrazine biosynthesis genes. The 2-oxoglutarate-Fe(II) type oxidoreductase ppzC hydroxylates peramine to yield the newly identified compound 8-hydroxyperamine whereas ppzD converts L-proline into trans-4-hydroxy-L-proline, a precursor of peramine biosynthesis. This Metarhizium rileyi (strain RCEF 4871) (Nomuraea rileyi) protein is Sulfotransferase ppzF.